The primary structure comprises 312 residues: Phosphoribosylaminoimidazole-succinocarboxamide synthase (312 aa).

Belongs to the SAICAR synthetase family.

The catalysed reaction is 5-amino-1-(5-phospho-D-ribosyl)imidazole-4-carboxylate + L-aspartate + ATP = (2S)-2-[5-amino-1-(5-phospho-beta-D-ribosyl)imidazole-4-carboxamido]succinate + ADP + phosphate + 2 H(+). It functions in the pathway purine metabolism; IMP biosynthesis via de novo pathway; 5-amino-1-(5-phospho-D-ribosyl)imidazole-4-carboxamide from 5-amino-1-(5-phospho-D-ribosyl)imidazole-4-carboxylate: step 1/2. This Legionella pneumophila (strain Paris) protein is Phosphoribosylaminoimidazole-succinocarboxamide synthase.